The primary structure comprises 201 residues: Regulator of G-protein signaling 1 (201 aa).

Positions 75 to 191 (SLEKLLVSEE…LKSEIFFRLA (117 aa)) constitute an RGS domain.

It localises to the cell membrane. The protein localises to the cytoplasm. The protein resides in the cytosol. Regulates G protein-coupled receptor signaling cascades, including signaling downstream of the N-formylpeptide chemoattractant receptors and leukotriene receptors. Inhibits B cell chemotaxis. Inhibits signal transduction by increasing the GTPase activity of G protein alpha subunits, thereby driving them into their inactive GDP-bound form. The polypeptide is Regulator of G-protein signaling 1 (rgs1) (Xenopus laevis (African clawed frog)).